We begin with the raw amino-acid sequence, 349 residues long: KH domain-containing, RNA-binding, signal transduction-associated protein 2 (349 aa).

Residues 65 to 135 (LIPVKQYPKF…HLSDELHVLI (71 aa)) form the KH domain. Disordered regions lie at residues 181–263 (SEES…PPPA) and 321–349 (EWAT…YGRY). Residues 218–231 (RGVLTPRGTTVTRG) are compositionally biased toward low complexity. 2 positions are modified to omega-N-methylarginine: arginine 230 and arginine 240. The span at 340–349 (GYREHPYGRY) shows a compositional bias: basic and acidic residues.

The protein belongs to the KHDRBS family. Self-associates to form homooligomers. Interacts with KHDRBS1/SAM68; heterooligomer formation of KHDRBS family proteins may modulate RNA substrate specificity. Interacts with RBMX, SAFB, SFRS9 and YTHDC1. Interacts with FYN and PLCG1 (via SH3 domain). Interacts (phosphorylated) with FYN, GRB2, PLCG1 and RASA1 (via SH2 domain). Methylated. In terms of processing, tyrosine phosphorylated by FYN, PTK6 and SRC. Tyrosine phosphorylated by SRC during mitosis. As to expression, expressed in heart, skin, brain, colon, spleen, kidney, cervix and testis. In adult cerebellum expressed predominantly in Purkinje cells and in the hippocampus is abundantly expressed in glutamatergic dentate granule cells and in specific inhibitory Schaffer collateral-associated and path-associated interneurons; expression is restricted to neuronal subpopulations largely non-overlapping with expression of KHDRBS3/SLM-2 (at protein level).

Its subcellular location is the nucleus. Functionally, RNA-binding protein that plays a role in the regulation of alternative splicing and influences mRNA splice site selection and exon inclusion. Binds both poly(A) and poly(U) homopolymers. Phosphorylation by PTK6 inhibits its RNA-binding ability. Induces an increased concentration-dependent incorporation of exon in CD44 pre-mRNA by direct binding to purine-rich exonic enhancer. Can regulate alternative splicing of neurexins NRXN1-3 in the laminin G-like domain 6 containing the evolutionary conserved neurexin alternative spliced segment 4 (AS4) involved in neurexin selective targeting to postsynaptic partners. Regulates cell-type specific alternative splicing of NRXN1 at AS4 and acts synergystically with SAM68 in exon skipping. In contrast acts antagonistically with SAM68 in NRXN3 exon skipping at AS4. Its phosphorylation by FYN inhibits its ability to regulate splice site selection. May function as an adapter protein for Src kinases during mitosis. This is KH domain-containing, RNA-binding, signal transduction-associated protein 2 (Khdrbs2) from Mus musculus (Mouse).